The primary structure comprises 212 residues: Cyclin-P4-1 (212 aa).

The protein belongs to the cyclin family. Cyclin U/P subfamily.

The sequence is that of Cyclin-P4-1 (CYCP4-1) from Oryza sativa subsp. japonica (Rice).